We begin with the raw amino-acid sequence, 116 residues long: Putative iron-sulfur cluster insertion protein ErpA (116 aa).

Positions 44, 108, and 110 each coordinate iron-sulfur cluster.

It belongs to the HesB/IscA family. As to quaternary structure, homodimer. Iron-sulfur cluster serves as cofactor.

Required for insertion of 4Fe-4S clusters. This is Putative iron-sulfur cluster insertion protein ErpA from Aromatoleum aromaticum (strain DSM 19018 / LMG 30748 / EbN1) (Azoarcus sp. (strain EbN1)).